We begin with the raw amino-acid sequence, 69 residues long: Conopeptide Y-Fe1 (69 aa).

Residues 1–20 (MSKLGVVLFVFLLLLPLAAP) form the signal peptide. A propeptide spanning residues 21–69 (QPVGDQPADQPADRNAEARGTYLYPFSYYRLWRYFTRFLHKQPYYYVHI) is cleaved from the precursor.

It belongs to the conotoxin M superfamily. Conopeptide Y family. Expressed by the venom duct.

The protein localises to the secreted. Its function is as follows. Tyrosine-rich conopeptide that specifically targets voltage-gated potassium channel Kv1.6/KCNA6 (IC(50) is 8.8 uM) that is expressed in Xenopus oocytes. In vivo, causes seizures (at 5 nmol) and death (20 nmol) when intracranially injected into mice, and causes paralysis (at 10 pmol) to C.elegans. The polypeptide is Conopeptide Y-Fe1 (Conus ferrugineus (Cone snail)).